The sequence spans 450 residues: Tol-Pal system protein TolB (450 aa).

Residues 1–47 (MRKLWAPNWLSAKRHHANQAATRLIGRHALMAWLAAALALSAGAAQA) form the signal peptide.

It belongs to the TolB family. The Tol-Pal system is composed of five core proteins: the inner membrane proteins TolA, TolQ and TolR, the periplasmic protein TolB and the outer membrane protein Pal. They form a network linking the inner and outer membranes and the peptidoglycan layer.

It localises to the periplasm. Part of the Tol-Pal system, which plays a role in outer membrane invagination during cell division and is important for maintaining outer membrane integrity. The chain is Tol-Pal system protein TolB from Cupriavidus pinatubonensis (strain JMP 134 / LMG 1197) (Cupriavidus necator (strain JMP 134)).